Consider the following 148-residue polypeptide: Transcriptional regulator MraZ (148 aa).

SpoVT-AbrB domains follow at residues 5–51 and 80–123; these read STQL…PQPV and ACDV…DMAK.

Belongs to the MraZ family. In terms of assembly, forms oligomers.

Its subcellular location is the cytoplasm. The protein localises to the nucleoid. The polypeptide is Transcriptional regulator MraZ (Nitrosomonas eutropha (strain DSM 101675 / C91 / Nm57)).